The chain runs to 298 residues: MKIVLAESLGFCYGVNRAVEATKRLLKEKRDARVIGDIVHNEIVMKKLKDMGLKVYPDLSSIDFSDTAENSVAIIRAHGASPDVEDFLKRRFGYVVDLTCPIVYNVFSLAKDLEKKGYFIVIFGKKDHAEVKALCGRLNDYLIVEPGYDFETIKAFLREKKPKKVALISQTTMNSESFEKLAEKLLKLEGIEVSVNNTICNVTINREKMAIHLAQTCDAVVVVGGKRSSNTGKLAKIVESHGKRAFHVQNPEQLPDLSIYRKVGIISGTSTPKEQILKILDYIKFTYEGEVIRNGGEV.

Cys-12 lines the [4Fe-4S] cluster pocket. His-40 and His-78 together coordinate (2E)-4-hydroxy-3-methylbut-2-enyl diphosphate. Dimethylallyl diphosphate-binding residues include His-40 and His-78. 2 residues coordinate isopentenyl diphosphate: His-40 and His-78. Cys-100 is a binding site for [4Fe-4S] cluster. Position 128 (His-128) interacts with (2E)-4-hydroxy-3-methylbut-2-enyl diphosphate. Residue His-128 participates in dimethylallyl diphosphate binding. His-128 lines the isopentenyl diphosphate pocket. The active-site Proton donor is the Glu-130. Thr-171 serves as a coordination point for (2E)-4-hydroxy-3-methylbut-2-enyl diphosphate. Cys-200 contributes to the [4Fe-4S] cluster binding site. The (2E)-4-hydroxy-3-methylbut-2-enyl diphosphate site is built by Ser-228, Ser-229, Asn-230, and Ser-270. Residues Ser-228, Ser-229, Asn-230, and Ser-270 each contribute to the dimethylallyl diphosphate site. Residues Ser-228, Ser-229, Asn-230, and Ser-270 each coordinate isopentenyl diphosphate.

The protein belongs to the IspH family. The cofactor is [4Fe-4S] cluster.

It catalyses the reaction isopentenyl diphosphate + 2 oxidized [2Fe-2S]-[ferredoxin] + H2O = (2E)-4-hydroxy-3-methylbut-2-enyl diphosphate + 2 reduced [2Fe-2S]-[ferredoxin] + 2 H(+). It carries out the reaction dimethylallyl diphosphate + 2 oxidized [2Fe-2S]-[ferredoxin] + H2O = (2E)-4-hydroxy-3-methylbut-2-enyl diphosphate + 2 reduced [2Fe-2S]-[ferredoxin] + 2 H(+). The protein operates within isoprenoid biosynthesis; dimethylallyl diphosphate biosynthesis; dimethylallyl diphosphate from (2E)-4-hydroxy-3-methylbutenyl diphosphate: step 1/1. It participates in isoprenoid biosynthesis; isopentenyl diphosphate biosynthesis via DXP pathway; isopentenyl diphosphate from 1-deoxy-D-xylulose 5-phosphate: step 6/6. In terms of biological role, catalyzes the conversion of 1-hydroxy-2-methyl-2-(E)-butenyl 4-diphosphate (HMBPP) into a mixture of isopentenyl diphosphate (IPP) and dimethylallyl diphosphate (DMAPP). Acts in the terminal step of the DOXP/MEP pathway for isoprenoid precursor biosynthesis. The polypeptide is 4-hydroxy-3-methylbut-2-enyl diphosphate reductase (Kosmotoga olearia (strain ATCC BAA-1733 / DSM 21960 / TBF 19.5.1)).